The chain runs to 71 residues: Phosphatidylinositol N-acetylglucosaminyltransferase ERI1 subunit (71 aa).

2 consecutive transmembrane segments (helical) span residues 5 to 25 (VAAT…LWCL) and 35 to 55 (LYYW…CVIS).

Interacts with GPI2, suggesting that it is a component of the GPI-GnT complex, probably composed of GPI1, GPI2, GPI3, GPI15, and ERI1.

Its subcellular location is the endoplasmic reticulum membrane. The protein operates within glycolipid biosynthesis; glycosylphosphatidylinositol-anchor biosynthesis. Functionally, probable component of the GPI-GlcNAc transferase (GPI-GnT) complex in the endoplasmic reticulum, a complex that catalyzes transfer of GlcNAc from UDP-GlcNAc to an acceptor phosphatidylinositol, the first step in the production of GPI-anchors for cell surface proteins. The chain is Phosphatidylinositol N-acetylglucosaminyltransferase ERI1 subunit (ERI1) from Eremothecium gossypii (strain ATCC 10895 / CBS 109.51 / FGSC 9923 / NRRL Y-1056) (Yeast).